The chain runs to 745 residues: MSLLTRLCKGNVPLRLNTLKHLSQCGYSSHAKFSEHKPIEKIRNIGISAHIDSGKTTLTERILFYTGRIAEMHEVRGKDNVGATMDSMELERQRGITIQSAATYTLWKDTNINIIDTPGHVDFTVEVERALRVLDGAVLVLCAVGGVQSQTLTVNRQMKRYNVPCLAFINKLDRLGSNPYRVLSQMRSKMNHNAAFIQLPIGVESNCKGIVDLVQEKAIYFEGDHGMDIRLDEIPQDMRAESGERRQELIEHLSNADEKFGELFLEEKPFTEKDIKEALRRTCIQRTFTPVLVGTALKNKGVQPLLDAVLDYLPNPGEVENLAFIEHEGKEPEKVVLNPARDGKDPFMGLAFKLEAGRFGQLTYLRCYQGVLRKGDNIFNARTNKKVRIARLVRLHSNQMEDVNEVFAGDIFALFGVDCASGDTFTTNPKNHLAMESIFVPEPVVSMAIKPNNTKDRDNFSKAIARFTKEDPTFHFHFDNDVKETLVSGMGELHLEIYAQRMEREYGCPVTLGKPKVAFRETLVGPCEFDYLHKKQSGGSGQYARIIGIMEPLPPSQNTLLEFVDETVGTNVPKQFIPGVEKGYREMAERGMLSGHKLSGIRFRLQDGGHHIVDSSELAFMLAAHGAIKEVFQNGSWQILEPIMLVEVTAPEEFQGAVMGHLSKRHGIITGTEGTEGWFTVYAEVPLNDMFGYAGELRSSTQGKGEFTMEYSRYSPCLPEVQEQIVRQYQESQGVGQAEKKKKKN.

Residues 40–317 (EKIRNIGISA…AVLDYLPNPG (278 aa)) form the tr-type G domain. Residues 49–56 (AHIDSGKT), 116–120 (DTPGH), and 170–173 (NKLD) each bind GTP.

This sequence belongs to the TRAFAC class translation factor GTPase superfamily. Classic translation factor GTPase family. EF-G/EF-2 subfamily.

It is found in the mitochondrion. Its pathway is protein biosynthesis; polypeptide chain elongation. In terms of biological role, mitochondrial GTPase that catalyzes the GTP-dependent ribosomal translocation step during translation elongation. During this step, the ribosome changes from the pre-translocational (PRE) to the post-translocational (POST) state as the newly formed A-site-bound peptidyl-tRNA and P-site-bound deacylated tRNA move to the P and E sites, respectively. Catalyzes the coordinated movement of the two tRNA molecules, the mRNA and conformational changes in the ribosome. Essential during development as it acts as a retrograde signal from mitochondria to the nucleus to slow down cell proliferation if mitochondrial energy output is low. This Drosophila willistoni (Fruit fly) protein is Elongation factor G, mitochondrial.